The sequence spans 482 residues: tRNA sulfurtransferase (482 aa).

One can recognise a THUMP domain in the interval 61 to 165 (LAIRDALTRI…DDRLLLIKGR (105 aa)). ATP-binding positions include 183–184 (LI), lysine 265, glycine 287, and glutamine 296. An intrachain disulfide couples cysteine 344 to cysteine 456. A Rhodanese domain is found at 404-482 (FGPNDVILDI…GFNNVKVYRP (79 aa)). Cysteine 456 acts as the Cysteine persulfide intermediate in catalysis.

Belongs to the ThiI family.

The protein localises to the cytoplasm. It carries out the reaction [ThiI sulfur-carrier protein]-S-sulfanyl-L-cysteine + a uridine in tRNA + 2 reduced [2Fe-2S]-[ferredoxin] + ATP + H(+) = [ThiI sulfur-carrier protein]-L-cysteine + a 4-thiouridine in tRNA + 2 oxidized [2Fe-2S]-[ferredoxin] + AMP + diphosphate. The catalysed reaction is [ThiS sulfur-carrier protein]-C-terminal Gly-Gly-AMP + S-sulfanyl-L-cysteinyl-[cysteine desulfurase] + AH2 = [ThiS sulfur-carrier protein]-C-terminal-Gly-aminoethanethioate + L-cysteinyl-[cysteine desulfurase] + A + AMP + 2 H(+). The protein operates within cofactor biosynthesis; thiamine diphosphate biosynthesis. In terms of biological role, catalyzes the ATP-dependent transfer of a sulfur to tRNA to produce 4-thiouridine in position 8 of tRNAs, which functions as a near-UV photosensor. Also catalyzes the transfer of sulfur to the sulfur carrier protein ThiS, forming ThiS-thiocarboxylate. This is a step in the synthesis of thiazole, in the thiamine biosynthesis pathway. The sulfur is donated as persulfide by IscS. This chain is tRNA sulfurtransferase, found in Escherichia fergusonii (strain ATCC 35469 / DSM 13698 / CCUG 18766 / IAM 14443 / JCM 21226 / LMG 7866 / NBRC 102419 / NCTC 12128 / CDC 0568-73).